Here is a 283-residue protein sequence, read N- to C-terminus: DegV domain-containing protein lin2658 (283 aa).

Residues 5–282 (IAVVTDSTTY…EGALGLTWSI (278 aa)) enclose the DegV domain. Hexadecanoate contacts are provided by Ser63 and Ser96.

Its function is as follows. May bind long-chain fatty acids, such as palmitate, and may play a role in lipid transport or fatty acid metabolism. This is DegV domain-containing protein lin2658 from Listeria innocua serovar 6a (strain ATCC BAA-680 / CLIP 11262).